A 681-amino-acid chain; its full sequence is PAB-dependent poly(A)-specific ribonuclease subunit pan3-like (681 aa).

The C3H1-type zinc finger occupies 9–38 (FSTNIPCRNEQLYGRCPYIDKGCFFQHKNQ). Disordered stretches follow at residues 38–58 (QDNA…PQNS) and 82–123 (SSAS…TVSL). The segment covering 41 to 50 (APASSKPPSA) has biased composition (low complexity). Residues 96–106 (KSYSSALSSGK) show a composition bias toward polar residues. Phosphoserine is present on S165.

The protein belongs to the protein kinase superfamily. PAN3 family.

It is found in the cytoplasm. Regulatory subunit of the poly(A)-nuclease (PAN) deadenylation complex. The sequence is that of PAB-dependent poly(A)-specific ribonuclease subunit pan3-like from Schizosaccharomyces pombe (strain 972 / ATCC 24843) (Fission yeast).